A 384-amino-acid chain; its full sequence is Surfeit locus protein 1-like (384 aa).

3 consecutive transmembrane segments (helical) span residues 55 to 75 (ALLW…YKFL), 302 to 322 (IPLD…TCFI), and 338 to 358 (IGVE…TKIY).

This sequence belongs to the SURF1 (TC 3.D.4.8) family.

It is found in the mitochondrion inner membrane. Functionally, may be involved in the biogenesis of the COX complex. The sequence is that of Surfeit locus protein 1-like from Arabidopsis thaliana (Mouse-ear cress).